Reading from the N-terminus, the 500-residue chain is Cytochrome P450 71B36 (500 aa).

Residues 1–21 form a helical membrane-spanning segment; sequence MATILFLSLLFLSCILLAAFT. Position 440 (C440) interacts with heme.

The protein belongs to the cytochrome P450 family. The cofactor is heme.

The protein resides in the membrane. The polypeptide is Cytochrome P450 71B36 (CYP71B36) (Arabidopsis thaliana (Mouse-ear cress)).